The primary structure comprises 1912 residues: Receptor-type tyrosine-protein phosphatase delta (1912 aa).

A signal peptide spans 1-20; it reads MVPVARPLSLLLTFFLCACA. The Extracellular portion of the chain corresponds to 21–1266; sequence ETPPRFTRTP…PQPITDEEEG (1246 aa). 2 consecutive Ig-like C2-type domains span residues 24-114 and 126-224; these read PRFT…TRLT and PTID…ANLY. Disulfide bonds link Cys-45–Cys-98 and Cys-147–Cys-207. Positions 181–189 are mini-exon peptide A9; sufficient for interaction with IL1RAPL1; sequence ESIGGTPIR. Residues 227 to 230 are mini-exon peptide B; required for interaction with SLITRK2 and in the function in pre-synaptic differentiation; Acts as an adjustable linker to control relative positions and orientations of the PTPRD second and third immunoglobilin domains for their simultaneous interactions with the first immunoglobilin domain of IL1RAPL1 and IL1RAP; Modulates affinity for IL1RAPL1 and IL1RAP; the sequence is ELRE. In terms of domain architecture, Ig-like C2-type 3 spans 236-318; that stretch reads PRFSIPPTNH…GVIEAIAQIT (83 aa). 2 N-linked (GlcNAc...) asparagine glycosylation sites follow: Asn-254 and Asn-299. A disulfide bridge links Cys-257 with Cys-302. Fibronectin type-III domains lie at 325–415, 420–516, 518–607, 612–709, 714–822, 823–916, 921–1016, and 1020–1106; these read PPGT…TSEQ, APRD…TGVP, QPLN…TMQS, PPQD…TDED, PPRK…TTGA, VPGK…VPEE, FPQN…TLPV, and FAKN…TAPD. 2 N-linked (GlcNAc...) asparagine glycosylation sites follow: Asn-724 and Asn-832. Residues 1267-1287 traverse the membrane as a helical segment; that stretch reads LIWVVGPVLAVVFIICIVIAI. The Cytoplasmic portion of the chain corresponds to 1288 to 1912; sequence LLYKRKRAES…YLGSFDHYAT (625 aa). Positions 1298–1319 are disordered; it reads ESRKSSLPNSKEVPSHHPTDPV. The segment covering 1310 to 1319 has biased composition (basic and acidic residues); sequence VPSHHPTDPV. Tyrosine-protein phosphatase domains are found at residues 1357–1612 and 1644–1903; these read FSQE…LLEA and MELE…ALEY. Substrate-binding positions include Asp-1521, 1553 to 1559, and Gln-1597; that span reads CSAGVGR. Catalysis depends on Cys-1553, which acts as the Phosphocysteine intermediate. Cys-1844 acts as the Phosphocysteine intermediate in catalysis.

The protein belongs to the protein-tyrosine phosphatase family. Receptor class 2A subfamily. In terms of assembly, interacts with PPFIA1, PPFIA2 and PPFIA3. Interacts (via extracellular domain) with SLITRK4 (via LRR 1 and 2 repeats). Interacts with SLITRK2; induces presynaptic differentiation. Interacts (via the second immunoglobilin domain) with IL1RAPL1 (via the first immunoglobilin domain); induces pre- and postsynaptic differentiation of neurons and synapse formation. Isoform G, isoform H, isoform I, isoform J, and isoform K do not interact with IL1RAPL1. Interacts (via the third immunoglobilin domain) with IL1RAP (via the first immunoglobilin domain); induces pre- and postsynaptic differentiation of neurons. A cleavage occurs, separating the extracellular domain from the transmembrane segment. This process called 'ectodomain shedding' is thought to be involved in receptor desensitization, signal transduction and/or membrane localization. In terms of tissue distribution, brain, kidney, heart, and some B-cell lines.

It localises to the membrane. The catalysed reaction is O-phospho-L-tyrosyl-[protein] + H2O = L-tyrosyl-[protein] + phosphate. Functionally, can bidirectionally induce pre- and post-synaptic differentiation of neurons by mediating interaction with IL1RAP and IL1RAPL1 trans-synaptically. Involved in pre-synaptic differentiation through interaction with SLITRK2. The protein is Receptor-type tyrosine-protein phosphatase delta (Ptprd) of Mus musculus (Mouse).